The primary structure comprises 269 residues: Hydroxyethylthiazole kinase (269 aa).

M45 contacts substrate. Residues R121 and T167 each coordinate ATP. G194 contributes to the substrate binding site.

Belongs to the Thz kinase family. It depends on Mg(2+) as a cofactor.

It carries out the reaction 5-(2-hydroxyethyl)-4-methylthiazole + ATP = 4-methyl-5-(2-phosphooxyethyl)-thiazole + ADP + H(+). It participates in cofactor biosynthesis; thiamine diphosphate biosynthesis; 4-methyl-5-(2-phosphoethyl)-thiazole from 5-(2-hydroxyethyl)-4-methylthiazole: step 1/1. Its function is as follows. Catalyzes the phosphorylation of the hydroxyl group of 4-methyl-5-beta-hydroxyethylthiazole (THZ). The chain is Hydroxyethylthiazole kinase from Brevibacillus brevis (strain 47 / JCM 6285 / NBRC 100599).